Here is a 276-residue protein sequence, read N- to C-terminus: Type II pantothenate kinase (276 aa).

Residue 8 to 15 participates in ATP binding; that stretch reads DAGGTLTK. Glutamate 76 functions as the Proton acceptor in the catalytic mechanism. ATP-binding positions include threonine 105, 127–131, phenylalanine 143, and serine 230; that span reads GGTIM.

Belongs to the type II pantothenate kinase family. Homodimer.

The protein resides in the cytoplasm. The catalysed reaction is (R)-pantothenate + ATP = (R)-4'-phosphopantothenate + ADP + H(+). It participates in cofactor biosynthesis; coenzyme A biosynthesis; CoA from (R)-pantothenate: step 1/5. Catalyzes the phosphorylation of pantothenate (Pan), the first step in CoA biosynthesis. The polypeptide is Type II pantothenate kinase (Bacillus cereus (strain AH820)).